Consider the following 380-residue polypeptide: Cytochrome b (380 aa).

The next 4 helical transmembrane spans lie at 33–53, 77–98, 113–133, and 178–198; these read FGSLLGMCLMIQILTGLFLAM, WLIRYLHANGASMFFICLFIHV, WNIGIVLLLTTMATAFVGYVL, and FFAFHFILPFIITALVLVHLL. H83 and H97 together coordinate heme b. Positions 182 and 196 each coordinate heme b. Residue H201 participates in a ubiquinone binding. The next 4 helical transmembrane spans lie at 226–246, 288–308, 320–340, and 347–367; these read IKDLLGALILLMVLMILVLFF, LGGVLALILSILILATLPLLN, ITQALYWIFVANLLTXTWIGG, and FTLIGXIASXLXFXIIIIFMP.

Belongs to the cytochrome b family. In terms of assembly, the cytochrome bc1 complex contains 11 subunits: 3 respiratory subunits (MT-CYB, CYC1 and UQCRFS1), 2 core proteins (UQCRC1 and UQCRC2) and 6 low-molecular weight proteins (UQCRH/QCR6, UQCRB/QCR7, UQCRQ/QCR8, UQCR10/QCR9, UQCR11/QCR10 and a cleavage product of UQCRFS1). This cytochrome bc1 complex then forms a dimer. Requires heme b as cofactor.

The protein localises to the mitochondrion inner membrane. In terms of biological role, component of the ubiquinol-cytochrome c reductase complex (complex III or cytochrome b-c1 complex) that is part of the mitochondrial respiratory chain. The b-c1 complex mediates electron transfer from ubiquinol to cytochrome c. Contributes to the generation of a proton gradient across the mitochondrial membrane that is then used for ATP synthesis. The chain is Cytochrome b (MT-CYB) from Rhipidomys wetzeli (Wetzel's climbing mouse).